A 114-amino-acid chain; its full sequence is Hydrogenase maturation factor HypA (114 aa).

His2 is a Ni(2+) binding site. Residues Cys74, Cys77, Cys90, and Cys93 each contribute to the Zn(2+) site.

Belongs to the HypA/HybF family.

In terms of biological role, involved in the maturation of [NiFe] hydrogenases. Required for nickel insertion into the metal center of the hydrogenase. This chain is Hydrogenase maturation factor HypA, found in Campylobacter jejuni subsp. jejuni serotype O:2 (strain ATCC 700819 / NCTC 11168).